We begin with the raw amino-acid sequence, 457 residues long: MDHLPIFCQLRDRDCLIVGGGDVAERKARLLLDAGARLTVNALAFIPQFTAWADAGMLTLVEGPFDESLLDTCWLAIAATDDDALNQRVSEAAEARRIFCNVVDAPKAASFIMPSIIDRSPLMVAVSSGGTSPVLARLLREKLESLLPLHLGQVAKYAGQLRGRVKQQFATMSERRRFWEKLFVNDRLAQSLANNDQKAITETTEQLINEPLDHRGEVVLVGAGPGDAGLLTLKGLQQIQQADVVVYDRLVSDDIMNLVRRDADRVFVGKRAGYHCVPQEEINQILLREAQKGKRVVRLKGGDPFIFGRGGEELETLCNAGIPFSVVPGITAASGCSAYSGIPLTHRDYAQSVRLITGHLKTGGELDWENLAAEKQTLVFYMGLNQAATIQQKLIEHGMPGEMPVAIVENGTAVTQRVIDGTLTQLGELAQQMNSPSLIIIGRVVGLRDKLNWFSNH.

The tract at residues 1–204 (MDHLPIFCQL…NDQKAITETT (204 aa)) is precorrin-2 dehydrogenase /sirohydrochlorin ferrochelatase. NAD(+) is bound by residues 22-23 (DV) and 43-44 (LA). S128 carries the phosphoserine modification. Positions 216–457 (GEVVLVGAGP…RDKLNWFSNH (242 aa)) are uroporphyrinogen-III C-methyltransferase. P225 contributes to the S-adenosyl-L-methionine binding site. D248 functions as the Proton acceptor in the catalytic mechanism. The active-site Proton donor is K270. S-adenosyl-L-methionine-binding positions include 301-303 (GGD), I306, 331-332 (TA), M382, and G411.

It in the N-terminal section; belongs to the precorrin-2 dehydrogenase / sirohydrochlorin ferrochelatase family. This sequence in the C-terminal section; belongs to the precorrin methyltransferase family.

The catalysed reaction is uroporphyrinogen III + 2 S-adenosyl-L-methionine = precorrin-2 + 2 S-adenosyl-L-homocysteine + H(+). It catalyses the reaction precorrin-2 + NAD(+) = sirohydrochlorin + NADH + 2 H(+). It carries out the reaction siroheme + 2 H(+) = sirohydrochlorin + Fe(2+). It functions in the pathway cofactor biosynthesis; adenosylcobalamin biosynthesis; precorrin-2 from uroporphyrinogen III: step 1/1. Its pathway is cofactor biosynthesis; adenosylcobalamin biosynthesis; sirohydrochlorin from precorrin-2: step 1/1. It participates in porphyrin-containing compound metabolism; siroheme biosynthesis; precorrin-2 from uroporphyrinogen III: step 1/1. The protein operates within porphyrin-containing compound metabolism; siroheme biosynthesis; siroheme from sirohydrochlorin: step 1/1. It functions in the pathway porphyrin-containing compound metabolism; siroheme biosynthesis; sirohydrochlorin from precorrin-2: step 1/1. Functionally, multifunctional enzyme that catalyzes the SAM-dependent methylations of uroporphyrinogen III at position C-2 and C-7 to form precorrin-2 via precorrin-1. Then it catalyzes the NAD-dependent ring dehydrogenation of precorrin-2 to yield sirohydrochlorin. Finally, it catalyzes the ferrochelation of sirohydrochlorin to yield siroheme. This Escherichia coli O8 (strain IAI1) protein is Siroheme synthase.